The sequence spans 218 residues: Telomere repeats-binding bouquet formation protein 2 (218 aa).

Residues 117 to 143 (HDRMASSDKENIRPTPEHKQELSKSAE) form a disordered region.

Belongs to the TERB2 family. In terms of assembly, component of the MAJIN-TERB1-TERB2 complex, composed of MAJIN, TERB1 and TERB2. In terms of tissue distribution, specifically expressed in germline tissues.

The protein resides in the chromosome. It is found in the telomere. The protein localises to the nucleus inner membrane. Its function is as follows. Meiosis-specific telomere-associated protein involved in meiotic telomere attachment to the nucleus inner membrane, a crucial step for homologous pairing and synapsis. Component of the MAJIN-TERB1-TERB2 complex, which promotes telomere cap exchange by mediating attachment of telomeric DNA to the inner nuclear membrane and replacement of the protective cap of telomeric chromosomes: in early meiosis, the MAJIN-TERB1-TERB2 complex associates with telomeric DNA and the shelterin/telosome complex. During prophase, the complex matures and promotes release of the shelterin/telosome complex from telomeric DNA. This chain is Telomere repeats-binding bouquet formation protein 2, found in Mus musculus (Mouse).